We begin with the raw amino-acid sequence, 705 residues long: Catalase C (705 aa).

Residues 1 to 31 form a disordered region; the sequence is MAKKPSAPNNTKPATIHDQKATRGNGGELHQ. Catalysis depends on residues His88 and Asn161. Tyr375 contributes to the heme binding site.

This sequence belongs to the catalase family. HPII subfamily. Heme is required as a cofactor.

It catalyses the reaction 2 H2O2 = O2 + 2 H2O. In terms of biological role, decomposes hydrogen peroxide into water and oxygen; serves to protect cells from the toxic effects of hydrogen peroxide. Could protect cells in nodules which have a high potential to produce hydrogen peroxide because of the strong reducing conditions required for nitrogen fixation and the action of several proteins. The chain is Catalase C (katE) from Rhizobium meliloti (strain 1021) (Ensifer meliloti).